We begin with the raw amino-acid sequence, 407 residues long: Imidazolonepropionase (407 aa).

Residues H74 and H76 each contribute to the Fe(3+) site. H74 and H76 together coordinate Zn(2+). Residues R83, Y146, and H179 each coordinate 4-imidazolone-5-propanoate. Residue Y146 coordinates N-formimidoyl-L-glutamate. Residue H244 coordinates Fe(3+). H244 serves as a coordination point for Zn(2+). Q247 provides a ligand contact to 4-imidazolone-5-propanoate. A Fe(3+)-binding site is contributed by D319. Zn(2+) is bound at residue D319. Residues N321 and G323 each coordinate N-formimidoyl-L-glutamate. Residue T324 coordinates 4-imidazolone-5-propanoate.

The protein belongs to the metallo-dependent hydrolases superfamily. HutI family. The cofactor is Zn(2+). Fe(3+) is required as a cofactor.

The protein resides in the cytoplasm. The catalysed reaction is 4-imidazolone-5-propanoate + H2O = N-formimidoyl-L-glutamate. The protein operates within amino-acid degradation; L-histidine degradation into L-glutamate; N-formimidoyl-L-glutamate from L-histidine: step 3/3. In terms of biological role, catalyzes the hydrolytic cleavage of the carbon-nitrogen bond in imidazolone-5-propanoate to yield N-formimidoyl-L-glutamate. It is the third step in the universal histidine degradation pathway. This chain is Imidazolonepropionase, found in Salmonella arizonae (strain ATCC BAA-731 / CDC346-86 / RSK2980).